The following is a 130-amino-acid chain: uncharacterized protein (130 aa).

The disordered stretch occupies residues arginine 76–serine 102.

This is an uncharacterized protein from Saccharomyces cerevisiae (strain ATCC 204508 / S288c) (Baker's yeast).